A 563-amino-acid polypeptide reads, in one-letter code: MTKTSRPLYISYAGPSLLEMPLLNKGSAFTPQERVEFNLIGLLPQNVETIEEQVTRVYSQYKQCASDLDKHIYLRSIQDNNETLFFRLLDSHLDEMLPIIYTPTVGQACQEFSKIYRTHRGLFISYPERDRIDDILRSATKDRIKIIVVTDSERILGLGDQGIGGMGIPIGKLSLYTACGGISPAYTLPIVLDVGTNNRELLDDPMYMGWRHERVSGKEYEDFIALFIDAVQRRWPDVLLQFEDFAQSNAMPLLEKYRDELCCFNDDIQGTASVAVGTLLAACKAKNETLGQQKVVFVGAGSAGCGIAEHIIAAMRIEGLSESEARKRIFMVDRFGLLTESMDNLLDFQKRLAQKTADVSGWTAGSEAFPQLLDVVTHAGATVMIGVSGQRGLFTEQVIRELHKHCAKPLVMPLSNPTSKVEATPEEILRWTDGNALVATGSPFAPVEINGRTVHIAQCNNSYIFPGIGLGVVACKASRITDRMLMAASNALAECSPMVTGKGDAVLPPLKEIQQVSRKIALAVAREAQAEGLALETTEEALLEAIERNFWLPGYRAYRRRSV.

The Proton donor role is filled by tyrosine 101. An NAD(+)-binding site is contributed by arginine 154. Residue lysine 172 is the Proton acceptor of the active site. 3 residues coordinate a divalent metal cation: glutamate 243, aspartate 244, and aspartate 267. Positions 267 and 416 each coordinate NAD(+).

The protein belongs to the malic enzymes family. Homotetramer. Mg(2+) is required as a cofactor. It depends on Mn(2+) as a cofactor.

The catalysed reaction is (S)-malate + NAD(+) = pyruvate + CO2 + NADH. It carries out the reaction oxaloacetate + H(+) = pyruvate + CO2. This is NAD-dependent malic enzyme from Pseudomonas syringae pv. syringae (strain B728a).